The primary structure comprises 192 residues: MSNTIKMVVGLGNPGKEYEQTRHNAGFWFLDELAWKWKASFKEEKKFFGEVARAALPDGDVWLLKPATFMNRSGQAVAALAQFYKIKPEEILVVHDELDIPCGRIKFKLGGGNGGHNGLKDIQAKLGTADYYRLRLGIGHPGDRNLVVGYVLNKPSTEHRRQIDDAVAKSLQAIPDILAGKWEEATRFLHSK.

Tyr-18 provides a ligand contact to tRNA. His-23 functions as the Proton acceptor in the catalytic mechanism. The tRNA site is built by Phe-69, Asn-71, and Asn-117.

This sequence belongs to the PTH family. As to quaternary structure, monomer.

It is found in the cytoplasm. It catalyses the reaction an N-acyl-L-alpha-aminoacyl-tRNA + H2O = an N-acyl-L-amino acid + a tRNA + H(+). Functionally, hydrolyzes ribosome-free peptidyl-tRNAs (with 1 or more amino acids incorporated), which drop off the ribosome during protein synthesis, or as a result of ribosome stalling. Catalyzes the release of premature peptidyl moieties from peptidyl-tRNA molecules trapped in stalled 50S ribosomal subunits, and thus maintains levels of free tRNAs and 50S ribosomes. This is Peptidyl-tRNA hydrolase from Neisseria meningitidis serogroup B (strain ATCC BAA-335 / MC58).